The following is a 160-amino-acid chain: Cytochrome b6-f complex subunit 4 (160 aa).

A run of 3 helical transmembrane segments spans residues 36–56 (LLYI…GLAV), 95–115 (LLGV…PFLE), and 131–151 (TVFL…ALPI).

It belongs to the cytochrome b family. PetD subfamily. The 4 large subunits of the cytochrome b6-f complex are cytochrome b6, subunit IV (17 kDa polypeptide, petD), cytochrome f and the Rieske protein, while the 4 small subunits are petG, petL, petM and petN. The complex functions as a dimer.

The protein resides in the plastid. It is found in the chloroplast thylakoid membrane. Functionally, component of the cytochrome b6-f complex, which mediates electron transfer between photosystem II (PSII) and photosystem I (PSI), cyclic electron flow around PSI, and state transitions. In Psilotum nudum (Whisk fern), this protein is Cytochrome b6-f complex subunit 4.